The following is a 315-amino-acid chain: Acetaldehyde dehydrogenase 1 (315 aa).

Residue 12-15 (SGNI) participates in NAD(+) binding. Cys132 (acyl-thioester intermediate) is an active-site residue. NAD(+) contacts are provided by residues 163-171 (SAGPGTRAN) and Asn291.

The protein belongs to the acetaldehyde dehydrogenase family.

The enzyme catalyses acetaldehyde + NAD(+) + CoA = acetyl-CoA + NADH + H(+). This is Acetaldehyde dehydrogenase 1 from Paraburkholderia phymatum (strain DSM 17167 / CIP 108236 / LMG 21445 / STM815) (Burkholderia phymatum).